Reading from the N-terminus, the 169-residue chain is Cell division inhibitor SulA (169 aa).

Residues 1-22 (MHTSIYANRSTSFSPSAGNDTQ) are disordered. The interval 106 to 112 (ALRTGNY) is ftsZ binding. The segment at 162 to 169 (KIHSNLYH) is lon protease binding.

The protein belongs to the SulA family. In terms of assembly, interacts with FtsZ. In terms of processing, is rapidly cleaved and degraded by the Lon protease once DNA damage is repaired.

In terms of biological role, component of the SOS system and an inhibitor of cell division. Accumulation of SulA causes rapid cessation of cell division and the appearance of long, non-septate filaments. In the presence of GTP, binds a polymerization-competent form of FtsZ in a 1:1 ratio, thus inhibiting FtsZ polymerization and therefore preventing it from participating in the assembly of the Z ring. This mechanism prevents the premature segregation of damaged DNA to daughter cells during cell division. The protein is Cell division inhibitor SulA of Enterobacter sp. (strain 638).